Reading from the N-terminus, the 715-residue chain is MEDISTIKKLEGLSVHCEDNNNNNNNNNNKENINNDDNNINPNRNATSSLLKGNIQQVKKKKVFARLHLFNRDGTVKQIVEMRKYKFIIGSDQKSTDILITRPGVYSNHAEIIYDKEVRKFYLNPLVDPSISDTIRINFIPFINKKEVLGNNDIISIGLRAFRIEFFAPVYVDNLILPKNIQPQQQQQKQQQQQQQQQQAPTAQKKLKQEVEHILTAATTTPTTTTTKPKKLKTAPPTTVASSSTIPKTTTTKKQAIEQPSKSNLKSSQNKLSTTTTTTITSKPPLNKSSIDGDTRSESSKALQGLKPKEQKKDIMKSLISSKKANTHEEKEEGESEEEEEEEEEEEEEEEEEEEEEQLEDKQKQTKTPISQNKSASSNIKPLSKTSKSNPPPLSAATKSNPVVKKITSTTVTRTTKKADTETKQEIKITKSSTTTKQQTQEEIEQELKLESIRKRIEQFINKFEKEINDNDFKDLDEGKRKIKESLDFISKTKYEFQGTTSNPGDVESTPLDKWFKNIPYEDFVDSFKLKYYSIITEPVSITSILNKLKSGPNYQLAEVLKDFKQMLINVTLYHKEPNEYWWISHQCNIQFYKSLLETGLITQDQYQIQYQTSNNEIVKLDKTLNLVPKLVVVENNDEDDNNDDEGSKKAVLVDEDEDECLNNQNNPTTYDSDGDFVTKQSDQESDEESDEESDEESDEERDQLSEEEDQEATN.

Disordered stretches follow at residues 18 to 46 (EDNN…NRNA) and 186 to 425 (QQQK…ETKQ). Low complexity-rich tracts occupy residues 20–45 (NNNN…PNRN), 186–204 (QQQK…PTAQ), 215–227 (LTAA…TTTT), 234–254 (TAPP…TTKK), and 261–281 (SKSN…TTIT). Positions 307–316 (KPKEQKKDIM) are enriched in basic and acidic residues. A coiled-coil region spans residues 322 to 368 (SKKANTHEEKEEGESEEEEEEEEEEEEEEEEEEEEEQLEDKQKQTKT). Residues 332-359 (EEGESEEEEEEEEEEEEEEEEEEEEEQL) are compositionally biased toward acidic residues. Over residues 366 to 389 (TKTPISQNKSASSNIKPLSKTSKS) the composition is skewed to polar residues. Over residues 405–414 (KKITSTTVTR) the composition is skewed to low complexity. Residues 437-470 (KQQTQEEIEQELKLESIRKRIEQFINKFEKEIND) are a coiled coil. Positions 474–599 (KDLDEGKRKI…IQFYKSLLET (126 aa)) constitute a Bromo domain. The segment at 653–715 (LVDEDEDECL…SEEEDQEATN (63 aa)) is disordered. Polar residues predominate over residues 662–672 (LNNQNNPTTYD). The segment covering 684–715 (QESDEESDEESDEESDEERDQLSEEEDQEATN) has biased composition (acidic residues).

The chain is Bromodomain-containing protein DDB_G0278469 from Dictyostelium discoideum (Social amoeba).